A 92-amino-acid chain; its full sequence is Small ribosomal subunit protein uS19 (92 aa).

The protein belongs to the universal ribosomal protein uS19 family.

Its function is as follows. Protein S19 forms a complex with S13 that binds strongly to the 16S ribosomal RNA. This is Small ribosomal subunit protein uS19 from Paracoccus denitrificans (strain Pd 1222).